Consider the following 388-residue polypeptide: MVGTPLFSNAKKILLLGSGELGKEVIIEAQRFGVECIAVDSYENAPAMQVAHKYHIIDMKDAGALRAVIEKEKPDLIVPEIEAINTDTLKEMESEGYHVVPTANATKLTMDREGIRRLAFEKLGLRTAKYEFAENLEELKEAVTRIGIPCIIKPIMSSSGKGQSTIKSESDIKTAWNYAKSAARGIGTKVIVEEFIKFDYEITLLTARTAEGTRFCEPIGHIQVDGDYHESWQPHPMCAPTKAKAQEMAKKITDELGGYGIFGVELFVLDDEVIFSEVSPRPHDTGMVTMVTQKMSEFEIHARAILGLPVNVDIVSPGASHVIKSEILKWAPEYEIHEASKVKDTKIRLFGKPIAKVGRRMGVALAVSDDVIKAREHAEKVAHLVKIK.

N(1)-(5-phospho-beta-D-ribosyl)glycinamide is bound by residues 20-21 (EL) and Glu80. ATP contacts are provided by residues Arg112, Lys153, 158 to 163 (SSGKGQ), 193 to 196 (EEFI), and Glu201. An ATP-grasp domain is found at 117–306 (RLAFEKLGLR…EFEIHARAIL (190 aa)). Residues Glu265 and Glu277 each contribute to the Mg(2+) site. N(1)-(5-phospho-beta-D-ribosyl)glycinamide contacts are provided by residues Asp284, Lys352, and 359–360 (RR).

It belongs to the PurK/PurT family. As to quaternary structure, homodimer.

It catalyses the reaction N(1)-(5-phospho-beta-D-ribosyl)glycinamide + formate + ATP = N(2)-formyl-N(1)-(5-phospho-beta-D-ribosyl)glycinamide + ADP + phosphate + H(+). It participates in purine metabolism; IMP biosynthesis via de novo pathway; N(2)-formyl-N(1)-(5-phospho-D-ribosyl)glycinamide from N(1)-(5-phospho-D-ribosyl)glycinamide (formate route): step 1/1. Involved in the de novo purine biosynthesis. Catalyzes the transfer of formate to 5-phospho-ribosyl-glycinamide (GAR), producing 5-phospho-ribosyl-N-formylglycinamide (FGAR). Formate is provided by PurU via hydrolysis of 10-formyl-tetrahydrofolate. This Methanococcus maripaludis (strain DSM 14266 / JCM 13030 / NBRC 101832 / S2 / LL) protein is Formate-dependent phosphoribosylglycinamide formyltransferase.